The sequence spans 390 residues: RNA binding protein fox-1 homolog 2 (390 aa).

Residues 1–127 (MQNEPLTPGY…STPKRLHVSN (127 aa)) form a disordered region. 2 stretches are compositionally biased toward polar residues: residues 18–28 (SQGNQEPTTTP) and 65–95 (GEHNLTLYGSTQAHGEQSSNSPSTQNGSLTT). The residue at position 67 (His-67) is a Phosphothreonine. A compositionally biased stretch (low complexity) spans 97–117 (GGAQTDGQQSQTQSSENSESK). The RRM domain occupies 121–197 (KRLHVSNIPF…RKIEVNNATA (77 aa)). Gly-249, Gly-267, Phe-268, Ala-277, and Arg-281 each carry omega-N-methylarginine. Residues Arg-297 and Arg-329 each carry the asymmetric dimethylarginine modification. Arg-381 and Arg-386 each carry asymmetric dimethylarginine; alternate. Arg-381 and Arg-386 each carry omega-N-methylarginine; alternate.

In terms of assembly, interacts with ER-alpha N-terminal activation domain. Interacts with RBPMS; the interaction allows cooperative assembly of stable cell-specific alternative splicing regulatory complexes.

The protein localises to the nucleus. The protein resides in the cytoplasm. Functionally, RNA-binding protein that regulates alternative splicing events by binding to 5'-UGCAUGU-3' elements. Prevents binding of U2AF2 to the 3'-splice site. Regulates alternative splicing of tissue-specific exons and of differentially spliced exons during erythropoiesis. RNA-binding protein that seems to act as a coregulatory factor of ER-alpha. Together with RNA binding proteins RBPMS and MBNL1/2, activates vascular smooth muscle cells alternative splicing events. In Homo sapiens (Human), this protein is RNA binding protein fox-1 homolog 2 (RBFOX2).